The chain runs to 98 residues: NADH-ubiquinone oxidoreductase chain 4L (98 aa).

Transmembrane regions (helical) follow at residues 1–21, 30–50, and 61–81; these read MSMV…GLLI, LLCL…TILI, and IILL…LVMI.

It belongs to the complex I subunit 4L family. Core subunit of respiratory chain NADH dehydrogenase (Complex I) which is composed of 45 different subunits.

It localises to the mitochondrion inner membrane. It catalyses the reaction a ubiquinone + NADH + 5 H(+)(in) = a ubiquinol + NAD(+) + 4 H(+)(out). In terms of biological role, core subunit of the mitochondrial membrane respiratory chain NADH dehydrogenase (Complex I) which catalyzes electron transfer from NADH through the respiratory chain, using ubiquinone as an electron acceptor. Part of the enzyme membrane arm which is embedded in the lipid bilayer and involved in proton translocation. In Neovison vison (American mink), this protein is NADH-ubiquinone oxidoreductase chain 4L (MT-ND4L).